The following is an 88-amino-acid chain: Phosphocarrier protein HPr (88 aa).

The HPr domain occupies 1–88 (MEKRDFHVVA…ETMKKEGLSE (88 aa)). H15 functions as the Pros-phosphohistidine intermediate in the catalytic mechanism. Residue S46 is modified to Phosphoserine; by HPrK/P.

It belongs to the HPr family.

The protein localises to the cytoplasm. With respect to regulation, phosphorylation on Ser-46 inhibits the phosphoryl transfer from enzyme I to HPr. Functionally, general (non sugar-specific) component of the phosphoenolpyruvate-dependent sugar phosphotransferase system (sugar PTS). This major carbohydrate active-transport system catalyzes the phosphorylation of incoming sugar substrates concomitantly with their translocation across the cell membrane. The phosphoryl group from phosphoenolpyruvate (PEP) is transferred to the phosphoryl carrier protein HPr by enzyme I. Phospho-HPr then transfers it to the PTS EIIA domain. Its function is as follows. P-Ser-HPr interacts with the catabolite control protein A (CcpA), forming a complex that binds to DNA at the catabolite response elements cre, operator sites preceding a large number of catabolite-regulated genes. Thus, P-Ser-HPr is a corepressor in carbon catabolite repression (CCR), a mechanism that allows bacteria to coordinate and optimize the utilization of available carbon sources. P-Ser-HPr also plays a role in inducer exclusion, in which it probably interacts with several non-PTS permeases and inhibits their transport activity. This chain is Phosphocarrier protein HPr (ptsH), found in Latilactobacillus sakei (Lactobacillus sakei).